The sequence spans 324 residues: Ribosomal RNA small subunit methyltransferase H (324 aa).

Residues 35-37, D55, F85, D103, and Q110 contribute to the S-adenosyl-L-methionine site; that span reads GGH.

It belongs to the methyltransferase superfamily. RsmH family.

The protein resides in the cytoplasm. The enzyme catalyses cytidine(1402) in 16S rRNA + S-adenosyl-L-methionine = N(4)-methylcytidine(1402) in 16S rRNA + S-adenosyl-L-homocysteine + H(+). Its function is as follows. Specifically methylates the N4 position of cytidine in position 1402 (C1402) of 16S rRNA. The protein is Ribosomal RNA small subunit methyltransferase H of Solidesulfovibrio magneticus (strain ATCC 700980 / DSM 13731 / RS-1) (Desulfovibrio magneticus).